The primary structure comprises 138 residues: uncharacterized protein (138 aa).

A disordered region spans residues 84–104 (PPKKTSPATSSSLKPRPGPRG). Residues 85–98 (PKKTSPATSSSLKP) are compositionally biased toward low complexity.

To M.pneumoniae MPN_413 and MPN_463.

This is an uncharacterized protein from Mycoplasma pneumoniae (strain ATCC 29342 / M129 / Subtype 1) (Mycoplasmoides pneumoniae).